Consider the following 292-residue polypeptide: UDP-N-acetylenolpyruvoylglucosamine reductase (292 aa).

In terms of domain architecture, FAD-binding PCMH-type spans 21 to 186; sequence QAGGLVDYLA…ISATFELQPD (166 aa). The active site involves Arg165. Catalysis depends on Ser215, which acts as the Proton donor. Residue Glu285 is part of the active site.

It belongs to the MurB family. FAD is required as a cofactor.

The protein localises to the cytoplasm. The enzyme catalyses UDP-N-acetyl-alpha-D-muramate + NADP(+) = UDP-N-acetyl-3-O-(1-carboxyvinyl)-alpha-D-glucosamine + NADPH + H(+). It participates in cell wall biogenesis; peptidoglycan biosynthesis. Cell wall formation. The chain is UDP-N-acetylenolpyruvoylglucosamine reductase from Leuconostoc mesenteroides subsp. mesenteroides (strain ATCC 8293 / DSM 20343 / BCRC 11652 / CCM 1803 / JCM 6124 / NCDO 523 / NBRC 100496 / NCIMB 8023 / NCTC 12954 / NRRL B-1118 / 37Y).